The following is a 209-amino-acid chain: PF03932 family protein CutC (209 aa).

Its subcellular location is the cytoplasm. This chain is PF03932 family protein CutC, found in Streptococcus pyogenes serotype M6 (strain ATCC BAA-946 / MGAS10394).